The sequence spans 359 residues: Alanine racemase (359 aa).

Catalysis depends on Lys34, which acts as the Proton acceptor; specific for D-alanine. Position 34 is an N6-(pyridoxal phosphate)lysine (Lys34). Arg129 provides a ligand contact to substrate. The active-site Proton acceptor; specific for L-alanine is the Tyr254. Met302 is a binding site for substrate.

This sequence belongs to the alanine racemase family. The cofactor is pyridoxal 5'-phosphate.

The catalysed reaction is L-alanine = D-alanine. It participates in amino-acid biosynthesis; D-alanine biosynthesis; D-alanine from L-alanine: step 1/1. In terms of biological role, catalyzes the interconversion of L-alanine and D-alanine. May also act on other amino acids. The sequence is that of Alanine racemase (alr) from Yersinia pestis.